Reading from the N-terminus, the 390-residue chain is Probable galacturonosyltransferase-like 9 (390 aa).

The Cytoplasmic portion of the chain corresponds to 1–10 (MRLRFPMKSA). The helical; Signal-anchor for type II membrane protein transmembrane segment at 11–31 (VLAFAIFLVFIPLFSVGIRMI) threads the bilayer. Over 32-390 (PGRLTAVSAT…SELTEDSSFF (359 aa)) the chain is Lumenal. Residues asparagine 205 and asparagine 223 are each glycosylated (N-linked (GlcNAc...) asparagine).

It belongs to the glycosyltransferase 8 family.

Its subcellular location is the golgi apparatus membrane. The protein operates within glycan metabolism; pectin biosynthesis. Functionally, may be involved in pectin and/or xylans biosynthesis in cell walls. This Arabidopsis thaliana (Mouse-ear cress) protein is Probable galacturonosyltransferase-like 9 (GATL9).